A 465-amino-acid polypeptide reads, in one-letter code: GTPase Der (465 aa).

EngA-type G domains follow at residues 3–167 (PLVA…PERS) and 179–352 (IHIA…VSAL). GTP contacts are provided by residues 9-16 (GRPNVGKS), 57-61 (DTGGM), 119-122 (NKID), 185-192 (GRPNVGKS), 232-236 (DTAGL), and 297-300 (NKWD). Residues 353-437 (RQFSTSEVNK…PVRFLFREGD (85 aa)) form the KH-like domain.

Belongs to the TRAFAC class TrmE-Era-EngA-EngB-Septin-like GTPase superfamily. EngA (Der) GTPase family. Associates with the 50S ribosomal subunit.

Functionally, GTPase that plays an essential role in the late steps of ribosome biogenesis. This Xylella fastidiosa (strain M12) protein is GTPase Der.